A 612-amino-acid chain; its full sequence is UvrABC system protein C (612 aa).

The GIY-YIG domain occupies 21–99; sequence HQPGVYRMYD…IKKYRPRYNV (79 aa). The 36-residue stretch at 208–243 folds into the UVR domain; that stretch reads QQVIDELMNKMEQASTDLDFERAARFRDQIAALRKT.

It belongs to the UvrC family. In terms of assembly, interacts with UvrB in an incision complex.

It is found in the cytoplasm. The UvrABC repair system catalyzes the recognition and processing of DNA lesions. UvrC both incises the 5' and 3' sides of the lesion. The N-terminal half is responsible for the 3' incision and the C-terminal half is responsible for the 5' incision. The chain is UvrABC system protein C from Idiomarina loihiensis (strain ATCC BAA-735 / DSM 15497 / L2-TR).